The following is a 374-amino-acid chain: (R)-phenyllactyl-CoA dehydratase beta subunit (374 aa).

It belongs to the FldB/FldC dehydratase alpha/beta subunit family. As to quaternary structure, part of the heterotrimeric phenyllactate dehydratase complex FldABC, composed of (R)-phenyllactate CoA-transferase (FldA) and a heterodimeric (R)-phenyllactyl-CoA dehydratase (FldB and FldC). [4Fe-4S] cluster is required as a cofactor. It depends on No flavin could be detected in the FldABC complex, and the addition of FAD, FMN or riboflavin to the dehydratase do not increase enzymatic activity. as a cofactor.

The catalysed reaction is (R)-3-phenyllactoyl-CoA = (E)-cinnamoyl-CoA + H2O. It catalyses the reaction (R)-3-(4-hydroxyphenyl)lactoyl-CoA = (E)-4-coumaroyl-CoA + H2O. It carries out the reaction (R)-3-(indol-3-yl)lactoyl-CoA = (E)-3-(indol-3-yl)acryloyl-CoA + H2O. The protein operates within amino-acid degradation; L-phenylalanine degradation. In terms of biological role, component of the phenyllactate dehydratase complex FldABC that is involved in the fermentation of L-phenylalanine via a Stickland reaction. This complex catalyzes the reversible syn-dehydration of (R)-phenyllactate to (E)-cinnamate in two steps, a CoA-transfer from cinnamoyl-CoA to phenyllactate, catalyzed by FldA, followed by the dehydration of phenyllactyl-CoA to cinnamoyl-CoA, catalyzed by FldB and FldC. Requires the activator FldI to initiate catalysis. This chain is (R)-phenyllactyl-CoA dehydratase beta subunit, found in Clostridium sporogenes.